The sequence spans 648 residues: tRNA 5-methylaminomethyl-2-thiouridine biosynthesis bifunctional protein MnmC (648 aa).

Positions 1–228 are tRNA (mnm(5)s(2)U34)-methyltransferase; that stretch reads MTDRLVPASL…VDDLLVGEYA (228 aa). Residues 252–648 form an FAD-dependent cmnm(5)s(2)U34 oxidoreductase region; sequence IGAGLAGCAV…LRARRVGRAG (397 aa).

This sequence in the N-terminal section; belongs to the methyltransferase superfamily. tRNA (mnm(5)s(2)U34)-methyltransferase family. In the C-terminal section; belongs to the DAO family. The cofactor is FAD.

The protein localises to the cytoplasm. It carries out the reaction 5-aminomethyl-2-thiouridine(34) in tRNA + S-adenosyl-L-methionine = 5-methylaminomethyl-2-thiouridine(34) in tRNA + S-adenosyl-L-homocysteine + H(+). Functionally, catalyzes the last two steps in the biosynthesis of 5-methylaminomethyl-2-thiouridine (mnm(5)s(2)U) at the wobble position (U34) in tRNA. Catalyzes the FAD-dependent demodification of cmnm(5)s(2)U34 to nm(5)s(2)U34, followed by the transfer of a methyl group from S-adenosyl-L-methionine to nm(5)s(2)U34, to form mnm(5)s(2)U34. The polypeptide is tRNA 5-methylaminomethyl-2-thiouridine biosynthesis bifunctional protein MnmC (Burkholderia lata (strain ATCC 17760 / DSM 23089 / LMG 22485 / NCIMB 9086 / R18194 / 383)).